A 374-amino-acid chain; its full sequence is Translocating chain-associated membrane protein 1 (374 aa).

Residues 1–32 (MAIRKKSNKNPPVLSHEFVLQNHADIVSCLAM) are Cytoplasmic-facing. A helical transmembrane segment spans residues 33–53 (LFLLGLMFEITAKGAIIFVAL). The Lumenal portion of the chain corresponds to 54-81 (QYNVTRPATEEQAAESASLYYYGIKDLA). N-linked (GlcNAc...) asparagine glycosylation occurs at N56. Residues 82 to 102 (TVFFYMLVAIIVHAIIQEYVL) form a helical membrane-spanning segment. At 103–121 (DKINRRMHFSKTKHSKFNE) the chain is on the cytoplasmic side. Residues 117-326 (SKFNESGQLS…NFQLRRWREH (210 aa)) enclose the TLC domain. Residues 122–142 (SGQLSAFYLFACVWGTFILVS) traverse the membrane as a helical segment. At 143 to 159 (ENYISDPTILWRAYPHN) the chain is on the lumenal side. A helical membrane pass occupies residues 160–180 (LMTFQMKFFYISQLAYWLHAF). The Cytoplasmic portion of the chain corresponds to 181 to 192 (PELYFQKTKKED). A helical transmembrane segment spans residues 193–213 (IPRQLVYIGLYLFHIAGAYLL). Residue N214 is a topological domain, lumenal. A helical transmembrane segment spans residues 215-235 (LNHLGLVLLVLHYFVEFLFHI). The Cytoplasmic portion of the chain corresponds to 236–251 (SRLFYFSDEKYQKGFS). The helical transmembrane segment at 252–272 (LWAVLFVLGRLLTLILSVLTV) threads the bilayer. Residues 273 to 297 (GFGLARAENQKLDFSTGNFNVLAVR) lie on the Lumenal side of the membrane. A helical transmembrane segment spans residues 298 to 318 (IAVLASICITQAFMMWKFINF). Over 319 to 374 (QLRRWREHSAFQAPPVKRKPAVTKGRSSRKGTENGVNGTVTSNGADSPRSRKEKSS) the chain is Cytoplasmic. Residues 333–374 (PVKRKPAVTKGRSSRKGTENGVNGTVTSNGADSPRSRKEKSS) form a disordered region. The span at 334-347 (VKRKPAVTKGRSSR) shows a compositional bias: basic residues. Over residues 352-363 (NGVNGTVTSNGA) the composition is skewed to polar residues. Phosphoserine is present on S365.

This sequence belongs to the TRAM family. Interacts with SEC61B. May interact with Derlin-1/DERL1. N-glycosylated.

The protein localises to the endoplasmic reticulum membrane. In terms of biological role, involved in the translocation of nascent protein chains into or through the endoplasmic reticulum (ER) membrane by facilitating the proper chain positioning at the SEC61 channel. Regulates the exposure of nascent secretory protein chain to the cytosol during translocation into the ER. May affect the phospholipid bilayer in the vicinity of the lateral gate of the SEC61 channel, thereby facilitating ER protein transport. Intimately associates with transmembrane (TM) domain of nascent membrane proteins during the entire integration process into the ER membrane. Associates with the second TM domain of G-protein-coupled receptor opsin/OPSD nascent chain in the ER membrane, which may facilitate its integration into the membrane. Under conditions of ER stress, participates in the disposal of misfolded ER membrane proteins during the unfolded protein response (UPR), an integrated stress response (ISR) pathway, by selectively retrotranslocating misfolded ER-membrane proteins from the ER into the cytosol where they are ubiquitinated and degraded by the proteasome. This chain is Translocating chain-associated membrane protein 1, found in Rattus norvegicus (Rat).